The sequence spans 72 residues: Translation initiation factor IF-1 (72 aa).

Positions 1–72 (MAKEESIEIE…TKGRITYRYK (72 aa)) constitute an S1-like domain.

It belongs to the IF-1 family. As to quaternary structure, component of the 30S ribosomal translation pre-initiation complex which assembles on the 30S ribosome in the order IF-2 and IF-3, IF-1 and N-formylmethionyl-tRNA(fMet); mRNA recruitment can occur at any time during PIC assembly.

It localises to the cytoplasm. Functionally, one of the essential components for the initiation of protein synthesis. Stabilizes the binding of IF-2 and IF-3 on the 30S subunit to which N-formylmethionyl-tRNA(fMet) subsequently binds. Helps modulate mRNA selection, yielding the 30S pre-initiation complex (PIC). Upon addition of the 50S ribosomal subunit IF-1, IF-2 and IF-3 are released leaving the mature 70S translation initiation complex. The protein is Translation initiation factor IF-1 of Chlorobium chlorochromatii (strain CaD3).